A 432-amino-acid chain; its full sequence is 3-phosphoshikimate 1-carboxyvinyltransferase (432 aa).

3-phosphoshikimate contacts are provided by K23, S24, and R28. K23 contributes to the phosphoenolpyruvate binding site. Phosphoenolpyruvate-binding residues include G95 and R123. 4 residues coordinate 3-phosphoshikimate: S167, Q169, D317, and K344. Phosphoenolpyruvate is bound at residue Q169. The active-site Proton acceptor is D317. Phosphoenolpyruvate contacts are provided by R348 and R390.

It belongs to the EPSP synthase family. As to quaternary structure, monomer.

The protein localises to the cytoplasm. The catalysed reaction is 3-phosphoshikimate + phosphoenolpyruvate = 5-O-(1-carboxyvinyl)-3-phosphoshikimate + phosphate. It functions in the pathway metabolic intermediate biosynthesis; chorismate biosynthesis; chorismate from D-erythrose 4-phosphate and phosphoenolpyruvate: step 6/7. Its function is as follows. Catalyzes the transfer of the enolpyruvyl moiety of phosphoenolpyruvate (PEP) to the 5-hydroxyl of shikimate-3-phosphate (S3P) to produce enolpyruvyl shikimate-3-phosphate and inorganic phosphate. This chain is 3-phosphoshikimate 1-carboxyvinyltransferase, found in Staphylococcus carnosus (strain TM300).